An 897-amino-acid polypeptide reads, in one-letter code: Schlafen family member 13 (897 aa).

A n'-domain region region spans residues 2 to 355; sequence EANHCSLGVY…WVEKMMDADP (354 aa). Catalysis depends on residues glutamate 208 and glutamate 213. Residues histidine 284, cysteine 286, and cysteine 321 each contribute to the Zn(2+) site. An ATP-binding site is contributed by 599 to 606; that stretch reads GLPGSGKT.

Belongs to the Schlafen family. Subgroup III subfamily. Mg(2+) serves as cofactor.

It is found in the cytoplasm. Endoribonuclease that cleaves tRNAs and rRNAs. Cleaves tRNAs 11 nucleotides from the 3'-terminus at the acceptor stem. Does not act on tRNA(Sec). Able to restrict HIV-1 virus replication; ability to inhibit HIV-1 replication is dependent on endoribonuclease activity. The sequence is that of Schlafen family member 13 from Homo sapiens (Human).